Consider the following 368-residue polypeptide: MTVTGIIAEFNPFHNGHKYLLETAEGLKIIAMSGNFMQRGEPALIDKWIRSEMALKNGADIVVELPFFVSVQSADYFAQGAIDILCQLGIQQLAFGTENVIDYQKLIKVYEKKSEQMTAYLSTLEDTFSYPQKTQKMWEIFAGVKFSGQTPNHILGLSYAKASAGKHIQLCPIKRQGAAYHSKDKNHLLASASAIRQHLNDWDFISHSVPNAGLLINNPHMSWDHYFSFLKYQILNHSDLTSIFQVNDELASRIKKAIKVSQNIDHLVDTVATKRYTKARVRRILTYILVNAKEPTLPKGIHILGFTSKGQAHLKKLKKSRPLITRIGAETWDEMTQKADSIYQLGHQDIPEQSFGRIPIIIKNERLN.

ATP-binding positions include Ile7–Leu20, Gly96, Asn152, and Arg175.

It belongs to the TmcAL family.

The protein resides in the cytoplasm. The catalysed reaction is cytidine(34) in elongator tRNA(Met) + acetate + ATP = N(4)-acetylcytidine(34) in elongator tRNA(Met) + AMP + diphosphate. In terms of biological role, catalyzes the formation of N(4)-acetylcytidine (ac(4)C) at the wobble position of elongator tRNA(Met), using acetate and ATP as substrates. First activates an acetate ion to form acetyladenylate (Ac-AMP) and then transfers the acetyl group to tRNA to form ac(4)C34. The sequence is that of tRNA(Met) cytidine acetate ligase from Streptococcus pyogenes serotype M1.